The primary structure comprises 214 residues: Ribonuclease HII (214 aa).

In terms of domain architecture, RNase H type-2 spans 26 to 214 (EIVCGVDEAG…PVREAFDLIR (189 aa)). Positions 32, 33, and 124 each coordinate a divalent metal cation.

It belongs to the RNase HII family. Mn(2+) is required as a cofactor. The cofactor is Mg(2+).

It localises to the cytoplasm. The catalysed reaction is Endonucleolytic cleavage to 5'-phosphomonoester.. Its function is as follows. Endonuclease that specifically degrades the RNA of RNA-DNA hybrids. The sequence is that of Ribonuclease HII from Burkholderia thailandensis (strain ATCC 700388 / DSM 13276 / CCUG 48851 / CIP 106301 / E264).